The following is a 297-amino-acid chain: NAC domain-containing protein 72 (297 aa).

The region spanning Leu14 to Lys162 is the NAC domain. The DNA-binding element occupies Val111–Arg168. 2 disordered regions span residues Arg168–Asp195 and Gly259–Ser278. Positions Val266–Gln277 are enriched in polar residues.

As to expression, expressed in leaves and in root pericycle and epidermis.

The protein resides in the nucleus. Functionally, transcription factors that bind specifically to the 5'-CATGTG-3' motif and with bipartite regions with 5'-CGTr-3' and 5'-YACG-3' as cores. Involved in the regulation of metabolic reprogramming during senescence by promoting the chloroplast protein degradation and the catabolism of lysine, phytol and free fatty acids via the induction of CV, LKR/SDH and PES1 expression. Also triggers the degradation of starch and the accumulation of mono- and disaccharides during senescence by enhancing the expression of AMY1, SFP1 and SWEET15. The protein is NAC domain-containing protein 72 of Arabidopsis thaliana (Mouse-ear cress).